Here is a 322-residue protein sequence, read N- to C-terminus: uncharacterized protein (322 aa).

The first 27 residues, 1–27, serve as a signal peptide directing secretion; it reads MKRLFWNLKHKKAWLVLLLGTGMILSS. C28 carries N-palmitoyl cysteine lipidation. C28 carries S-diacylglycerol cysteine lipidation. The segment covering 235–254 has biased composition (polar residues); sequence DNSTNPNAPGSGQGDSTPPA. The segment at 235–298 is disordered; sequence DNSTNPNAPG…AVQRSQKSYG (64 aa). A compositionally biased stretch (gly residues) spans 257–267; the sequence is GEGGGSDGSSG. Residues 274–296 are compositionally biased toward polar residues; it reads NGQNTTPTSPQSSQPAVQRSQKS.

Its subcellular location is the cell membrane. This is an uncharacterized protein from Mycoplasma genitalium (strain ATCC 33530 / DSM 19775 / NCTC 10195 / G37) (Mycoplasmoides genitalium).